Here is a 388-residue protein sequence, read N- to C-terminus: Succinate--CoA ligase [ADP-forming] subunit beta (388 aa).

The 236-residue stretch at 9 to 244 (KEIFRSMGVA…LEEEDPKEIE (236 aa)) folds into the ATP-grasp domain. Residues K46, 53-55 (GRG), E99, C102, and E107 contribute to the ATP site. Mg(2+) is bound by residues N199 and D213. Substrate is bound by residues N264 and 321–323 (GIM).

The protein belongs to the succinate/malate CoA ligase beta subunit family. Heterotetramer of two alpha and two beta subunits. It depends on Mg(2+) as a cofactor.

It catalyses the reaction succinate + ATP + CoA = succinyl-CoA + ADP + phosphate. It carries out the reaction GTP + succinate + CoA = succinyl-CoA + GDP + phosphate. It participates in carbohydrate metabolism; tricarboxylic acid cycle; succinate from succinyl-CoA (ligase route): step 1/1. In terms of biological role, succinyl-CoA synthetase functions in the citric acid cycle (TCA), coupling the hydrolysis of succinyl-CoA to the synthesis of either ATP or GTP and thus represents the only step of substrate-level phosphorylation in the TCA. The beta subunit provides nucleotide specificity of the enzyme and binds the substrate succinate, while the binding sites for coenzyme A and phosphate are found in the alpha subunit. The protein is Succinate--CoA ligase [ADP-forming] subunit beta of Staphylococcus epidermidis (strain ATCC 35984 / DSM 28319 / BCRC 17069 / CCUG 31568 / BM 3577 / RP62A).